Consider the following 148-residue polypeptide: Large ribosomal subunit protein bL9 (148 aa).

The protein belongs to the bacterial ribosomal protein bL9 family.

Functionally, binds to the 23S rRNA. The sequence is that of Large ribosomal subunit protein bL9 from Lysinibacillus sphaericus (strain C3-41).